Consider the following 370-residue polypeptide: Transcription factor E2F2 (370 aa).

The disordered stretch occupies residues 1-73; the sequence is MYKRKTASIV…QSQSQPGQQR (73 aa). The segment covering 15-26 has biased composition (low complexity); that stretch reads SAAGTTSSAMMM. Over residues 31–49 the composition is skewed to polar residues; it reads AETSVRSQSYESTPVSMDT. Low complexity predominate over residues 59 to 73; sequence SPSNSQSQSQPGQQR. A DNA-binding region spans residues 72–137; sequence QRSVGSLVLL…GRHCSLVRWR (66 aa). The segment at 137–226 is dimerization; the sequence is RGGGFNNAKD…VDIKRNHYEL (90 aa).

This sequence belongs to the E2F/DP family. Forms a heterodimer with Dp. Interacts with Rbf/Rbf1 and Rbf2. Component of the DREAM complex, which is at least composed of Myb, Caf1-55, mip40, mip120, mip130, E2f2, Dp, Rbf, Rbf2, lin-52, HDAC1/Rpd3 and l(3)mbt. In terms of tissue distribution, ubiquitously expressed in eye disk.

It localises to the nucleus. In terms of biological role, transcriptional repressor that binds to E2f sites and represses E2f-regulated target genes. Binding to E2f sites requires transcription factor Dp. Acts synergistically with Rbf2 to antagonize E2f1-mediated transcriptional activation. Component of the DREAM complex, a multiprotein complex that can both act as a transcription activator or repressor depending on the context. The DREAM complex is required for recruiting E2f2 at differentiation-specific promoters and for stabilizing E2f2-Rbf complexes during S phase. During development, the complex represses transcription of developmentally controlled E2f target genes. During oogenesis, plays a role in restricting DNA synthesis to sites of chorion gene amplification in late stage ovarian follicle cells. Plays an inhibitory role in ionizing radiation (IR)-induced p53-independent apoptosis. May be involved in cell cycle exit by temporarily limiting CycE-dependent activation of E2f-regulated transcription. The chain is Transcription factor E2F2 (E2f2) from Drosophila melanogaster (Fruit fly).